A 367-amino-acid polypeptide reads, in one-letter code: Alanine racemase (367 aa).

The active-site Proton acceptor; specific for D-alanine is the lysine 40. Position 40 is an N6-(pyridoxal phosphate)lysine (lysine 40). Residue arginine 136 coordinates substrate. Tyrosine 263 functions as the Proton acceptor; specific for L-alanine in the catalytic mechanism. Residue methionine 310 coordinates substrate.

Belongs to the alanine racemase family. Pyridoxal 5'-phosphate serves as cofactor.

The enzyme catalyses L-alanine = D-alanine. It participates in amino-acid biosynthesis; D-alanine biosynthesis; D-alanine from L-alanine: step 1/1. Its function is as follows. Catalyzes the interconversion of L-alanine and D-alanine. May also act on other amino acids. The protein is Alanine racemase (alr) of Lactococcus lactis subsp. lactis (strain IL1403) (Streptococcus lactis).